Reading from the N-terminus, the 152-residue chain is Large ribosomal subunit protein bL9 (152 aa).

The protein belongs to the bacterial ribosomal protein bL9 family.

In terms of biological role, binds to the 23S rRNA. This Trichormus variabilis (strain ATCC 29413 / PCC 7937) (Anabaena variabilis) protein is Large ribosomal subunit protein bL9.